The following is a 78-amino-acid chain: Exodeoxyribonuclease 7 small subunit (78 aa).

Belongs to the XseB family. As to quaternary structure, heterooligomer composed of large and small subunits.

It is found in the cytoplasm. The catalysed reaction is Exonucleolytic cleavage in either 5'- to 3'- or 3'- to 5'-direction to yield nucleoside 5'-phosphates.. In terms of biological role, bidirectionally degrades single-stranded DNA into large acid-insoluble oligonucleotides, which are then degraded further into small acid-soluble oligonucleotides. This is Exodeoxyribonuclease 7 small subunit from Cutibacterium acnes (strain DSM 16379 / KPA171202) (Propionibacterium acnes).